Consider the following 792-residue polypeptide: Starch synthase 2, chloroplastic/amyloplastic (792 aa).

Residues Met-1–Lys-55 constitute a chloroplast transit peptide. Residues Ile-105–Leu-295 are disordered. Residues Gly-145–Ser-156 are compositionally biased toward polar residues. Residues Ser-179 to Pro-192 are compositionally biased toward low complexity. The span at Ser-221–Val-233 shows a compositional bias: polar residues. A compositionally biased stretch (basic and acidic residues) spans Lys-266 to Pro-275. Lys-315 provides a ligand contact to ADP-alpha-D-glucose.

It belongs to the glycosyltransferase 1 family. Bacterial/plant glycogen synthase subfamily. As to expression, expressed in roots, leaves and flowers.

The protein resides in the plastid. It localises to the chloroplast. Its subcellular location is the amyloplast. The catalysed reaction is [(1-&gt;4)-alpha-D-glucosyl](n) + ADP-alpha-D-glucose = [(1-&gt;4)-alpha-D-glucosyl](n+1) + ADP + H(+). The protein operates within glycan biosynthesis; starch biosynthesis. In terms of biological role, involved in the synthesis of glycan chains within amylopectin in leaves. Is required to produce chains with a degree of polymerization of 12 to 25 (DP12-DP25). This chain is Starch synthase 2, chloroplastic/amyloplastic (SS2), found in Arabidopsis thaliana (Mouse-ear cress).